A 130-amino-acid polypeptide reads, in one-letter code: MAQVQYYGTGRRKSSVARVRLVPGEGRVIINGRDFENYIPFAALREVVKQPLVATETLGNYNVLVNVNGGGYTGQAGAIRHGISRALLKADPEYRLTLKRAGLLTRDARMKERKKYGLKGARRAPQFSKR.

Belongs to the universal ribosomal protein uS9 family.

The protein is Small ribosomal subunit protein uS9 of Bacillus mycoides (strain KBAB4) (Bacillus weihenstephanensis).